We begin with the raw amino-acid sequence, 265 residues long: Eukaryotic translation initiation factor 3 subunit J (265 aa).

Disordered stretches follow at residues 1 to 113 (MPPS…DSDL) and 215 to 237 (SNEK…AAKT). The segment covering 27–45 (DEEDGDVLDSWDAADDSEV) has biased composition (acidic residues). A coiled-coil region spans residues 43–95 (SEVEREKAAKAAEAKAKAEAEAAANKKSKAQRIAEHKTRRKAAEDEEDDESDE). Residues 46–62 (EREKAAKAAEAKAKAEA) are compositionally biased toward basic and acidic residues. Residues 86–97 (EDEEDDESDEDE) show a composition bias toward acidic residues. Basic and acidic residues-rich tracts occupy residues 98–113 (AEKR…DSDL) and 217–229 (EKMK…DKGS).

The protein belongs to the eIF-3 subunit J family. Component of the eukaryotic translation initiation factor 3 (eIF-3) complex.

Its subcellular location is the cytoplasm. Its function is as follows. Component of the eukaryotic translation initiation factor 3 (eIF-3) complex, which is involved in protein synthesis of a specialized repertoire of mRNAs and, together with other initiation factors, stimulates binding of mRNA and methionyl-tRNAi to the 40S ribosome. The eIF-3 complex specifically targets and initiates translation of a subset of mRNAs involved in cell proliferation. This chain is Eukaryotic translation initiation factor 3 subunit J (hcr1), found in Emericella nidulans (strain FGSC A4 / ATCC 38163 / CBS 112.46 / NRRL 194 / M139) (Aspergillus nidulans).